Consider the following 561-residue polypeptide: Interleukin-1 receptor-like 2 (561 aa).

Positions 1–21 (MGMPPLLFCWVSFVLPLFVAA) are cleaved as a signal peptide. Ig-like C2-type domains lie at 22–113 (GNCT…INLT), 128–215 (SINS…VRNY), and 225–321 (SGGR…TCHA). Topologically, residues 22-338 (GNCTDVYMHH…ILKRPAPDFR (317 aa)) are extracellular. N-linked (GlcNAc...) asparagine glycans are attached at residues N23, N43, N55, N111, and N130. A disulfide bond links C44 and C97. A disulfide bridge connects residues C149 and C199. N-linked (GlcNAc...) asparagine glycosylation is found at N231, N237, N253, N269, N290, and N302. A disulfide bridge links C252 with C319. The helical transmembrane segment at 339 to 358 (AYLIGGLMAFLLLAVSILYI) threads the bilayer. Residues 359–561 (YNTFKVDIVL…LLGHTPRIPG (203 aa)) lie on the Cytoplasmic side of the membrane. The TIR domain occupies 384 to 539 (KLYDAYVLYP…KFWKKVRYHM (156 aa)). The active site involves E470.

The protein belongs to the interleukin-1 receptor family. In terms of assembly, interacts with IL1RAP; the association is enhanced by IL36B indicative for an functional signaling complex and inhibited by IL36RN. Predominant expression in the lung and epididymis, with lower expression in cerebral cortex and testis. Expression in the brain is non-neuronal and associated with the cerebral vasculature. Not detected in any cell line tested.

Its subcellular location is the membrane. It catalyses the reaction NAD(+) + H2O = ADP-D-ribose + nicotinamide + H(+). In terms of biological role, receptor for interleukin-36 (IL36A, IL36B and IL36G). After binding to interleukin-36 associates with the coreceptor IL1RAP to form the interleukin-36 receptor complex which mediates interleukin-36-dependent activation of NF-kappa-B, MAPK and other pathways. The IL-36 signaling system is thought to be present in epithelial barriers and to take part in local inflammatory response; it is similar to the IL-1 system. Seems to be involved in skin inflammatory response by induction of the IL-23/IL-17/IL-22 pathway. Receptor for the interleukin IL36G. Binding to the agonist leads to the activation of NF-kappa-B. The chain is Interleukin-1 receptor-like 2 (Il1rl2) from Rattus norvegicus (Rat).